Consider the following 108-residue polypeptide: MPKLGILKSKSMFCVIYRSSKRDQTYLYVEKKDDFSRVPEELMKGFGQPQLAMILPLDGRKKLVNADIEKVKLALTEQGYYLQLPPPPEDLLKQHLSVMGQKTDDTNK.

The region spanning 12 to 96 is the YcgL domain; the sequence is MFCVIYRSSK…PPEDLLKQHL (85 aa).

The chain is Protein YcgL from Shigella sonnei (strain Ss046).